The sequence spans 290 residues: HTH-type transcriptional regulator BudR (290 aa).

In terms of domain architecture, HTH lysR-type spans 1 to 58 (MELRYLRYFVAVAEARNFTRAAHDLGISQPPLSQQIQRLEREIGTPLLRRLTRGVELT). A DNA-binding region (H-T-H motif) is located at residues 18–37 (FTRAAHDLGISQPPLSQQIQ).

This sequence belongs to the LysR transcriptional regulatory family.

Regulator of the budABC operon for 2,3-butanediol synthesis. In Raoultella terrigena (Klebsiella terrigena), this protein is HTH-type transcriptional regulator BudR (budR).